Consider the following 247-residue polypeptide: Mitochondrial inner membrane protease ATP23 (247 aa).

The tract at residues 1 to 21 (MSVPPPPKEDLIKPNPPKSES) is disordered. H144 lines the a divalent metal cation pocket. E145 is a catalytic residue. H148 provides a ligand contact to a divalent metal cation.

It belongs to the peptidase M76 family.

The protein resides in the mitochondrion inner membrane. Functionally, has a dual role in the assembly of mitochondrial ATPase. Acts as a protease that removes N-terminal residues of mitochondrial ATPase CF(0) subunit 6 at the intermembrane space side. Also involved in the correct assembly of the membrane-embedded ATPase CF(0) particle, probably mediating association of subunit 6 with the subunit 9 ring. The protein is Mitochondrial inner membrane protease ATP23 (ATP23) of Kluyveromyces lactis (strain ATCC 8585 / CBS 2359 / DSM 70799 / NBRC 1267 / NRRL Y-1140 / WM37) (Yeast).